The primary structure comprises 390 residues: Bifunctional enzyme IspD/IspF (390 aa).

The 2-C-methyl-D-erythritol 4-phosphate cytidylyltransferase stretch occupies residues M1–I229. Positions R230 to E390 are 2-C-methyl-D-erythritol 2,4-cyclodiphosphate synthase. 2 residues coordinate a divalent metal cation: D236 and H238. 4-CDP-2-C-methyl-D-erythritol 2-phosphate contacts are provided by residues D236 to H238 and H262 to S263. Residue H270 participates in a divalent metal cation binding. Residues D284 to G286, T360 to E363, F367, and R370 each bind 4-CDP-2-C-methyl-D-erythritol 2-phosphate.

In the N-terminal section; belongs to the IspD/TarI cytidylyltransferase family. IspD subfamily. It in the C-terminal section; belongs to the IspF family. The cofactor is a divalent metal cation.

It carries out the reaction 2-C-methyl-D-erythritol 4-phosphate + CTP + H(+) = 4-CDP-2-C-methyl-D-erythritol + diphosphate. It catalyses the reaction 4-CDP-2-C-methyl-D-erythritol 2-phosphate = 2-C-methyl-D-erythritol 2,4-cyclic diphosphate + CMP. It functions in the pathway isoprenoid biosynthesis; isopentenyl diphosphate biosynthesis via DXP pathway; isopentenyl diphosphate from 1-deoxy-D-xylulose 5-phosphate: step 2/6. It participates in isoprenoid biosynthesis; isopentenyl diphosphate biosynthesis via DXP pathway; isopentenyl diphosphate from 1-deoxy-D-xylulose 5-phosphate: step 4/6. In terms of biological role, bifunctional enzyme that catalyzes the formation of 4-diphosphocytidyl-2-C-methyl-D-erythritol from CTP and 2-C-methyl-D-erythritol 4-phosphate (MEP) (IspD), and catalyzes the conversion of 4-diphosphocytidyl-2-C-methyl-D-erythritol 2-phosphate (CDP-ME2P) to 2-C-methyl-D-erythritol 2,4-cyclodiphosphate (ME-CPP) with a corresponding release of cytidine 5-monophosphate (CMP) (IspF). This is Bifunctional enzyme IspD/IspF from Brucella abortus biovar 1 (strain 9-941).